A 598-amino-acid chain; its full sequence is Elongation factor 4 (598 aa).

The tr-type G domain maps to 4–186; that stretch reads INIRNFAIIA…AIVSRLPAPS (183 aa). GTP-binding positions include 16 to 21 and 133 to 136; these read DHGKST and NKID.

Belongs to the TRAFAC class translation factor GTPase superfamily. Classic translation factor GTPase family. LepA subfamily.

It is found in the cell inner membrane. It catalyses the reaction GTP + H2O = GDP + phosphate + H(+). Functionally, required for accurate and efficient protein synthesis under certain stress conditions. May act as a fidelity factor of the translation reaction, by catalyzing a one-codon backward translocation of tRNAs on improperly translocated ribosomes. Back-translocation proceeds from a post-translocation (POST) complex to a pre-translocation (PRE) complex, thus giving elongation factor G a second chance to translocate the tRNAs correctly. Binds to ribosomes in a GTP-dependent manner. The chain is Elongation factor 4 from Ehrlichia ruminantium (strain Gardel).